The chain runs to 212 residues: Membrane-bound lytic murein transglycosylase E (212 aa).

This sequence belongs to the transglycosylase Slt family.

The enzyme catalyses Exolytic cleavage of the (1-&gt;4)-beta-glycosidic linkage between N-acetylmuramic acid (MurNAc) and N-acetylglucosamine (GlcNAc) residues in peptidoglycan, from either the reducing or the non-reducing ends of the peptidoglycan chains, with concomitant formation of a 1,6-anhydrobond in the MurNAc residue.. Functionally, murein-degrading enzyme. May play a role in recycling of muropeptides during cell elongation and/or cell division. This Buchnera aphidicola subsp. Baizongia pistaciae (strain Bp) protein is Membrane-bound lytic murein transglycosylase E (mltE).